The primary structure comprises 732 residues: Engulfment and cell motility protein 2 (732 aa).

The residue at position 48 (Tyr48) is a Phosphotyrosine. An ELMO domain is found at 323-497 (AQRDIIFELR…VVREQITRAL (175 aa)). Ser515 bears the Phosphoserine mark. Residues 565–686 (SSFRKIGNRR…LLGKDMSSEL (122 aa)) form the PH domain. The short motif at 712 to 719 (PEAPPPVP) is the SH3-binding element. Phosphotyrosine is present on Tyr729.

In terms of assembly, interacts directly with the SH3-domain of DOCK1 via its SH3-binding site. Probably forms a heterotrimeric complex with DOCK1 and RAC1. Interacts with ARHGEF16, DOCK4 and EPHA2; mediates activation of RAC1 by EPHA2. Interacts with ADGRB3. Interacts with AUTS2; the interaction is direct.

The protein resides in the cytoplasm. Its subcellular location is the cytosol. It localises to the membrane. Its function is as follows. Involved in cytoskeletal rearrangements required for phagocytosis of apoptotic cells and cell motility. Acts in association with DOCK1 and CRK. Was initially proposed to be required in complex with DOCK1 to activate Rac Rho small GTPases. May enhance the guanine nucleotide exchange factor (GEF) activity of DOCK1. The sequence is that of Engulfment and cell motility protein 2 (Elmo2) from Mus musculus (Mouse).